The chain runs to 208 residues: Small ribosomal subunit protein uS4 (208 aa).

The 66-residue stretch at 98–163 folds into the S4 RNA-binding domain; sequence QRLDNVVYRM…NPQITRAIEL (66 aa).

Belongs to the universal ribosomal protein uS4 family. Part of the 30S ribosomal subunit. Contacts protein S5. The interaction surface between S4 and S5 is involved in control of translational fidelity.

One of the primary rRNA binding proteins, it binds directly to 16S rRNA where it nucleates assembly of the body of the 30S subunit. Functionally, with S5 and S12 plays an important role in translational accuracy. The protein is Small ribosomal subunit protein uS4 of Campylobacter jejuni subsp. jejuni serotype O:6 (strain 81116 / NCTC 11828).